The following is a 335-amino-acid chain: Ornithine carbamoyltransferase (335 aa).

Carbamoyl phosphate contacts are provided by residues 56 to 59 (STRT), Q83, R107, and 134 to 137 (HPTQ). Residues N168, D232, and 236-237 (SM) contribute to the L-ornithine site. Residues 274–275 (CL) and R320 each bind carbamoyl phosphate.

It belongs to the aspartate/ornithine carbamoyltransferase superfamily. OTCase family.

The protein resides in the cytoplasm. The catalysed reaction is carbamoyl phosphate + L-ornithine = L-citrulline + phosphate + H(+). Its pathway is amino-acid biosynthesis; L-arginine biosynthesis; L-arginine from L-ornithine and carbamoyl phosphate: step 1/3. In terms of biological role, reversibly catalyzes the transfer of the carbamoyl group from carbamoyl phosphate (CP) to the N(epsilon) atom of ornithine (ORN) to produce L-citrulline. In Yersinia pestis bv. Antiqua (strain Nepal516), this protein is Ornithine carbamoyltransferase.